The primary structure comprises 406 residues: Protein translocase subunit SecD (406 aa).

The next 6 helical transmembrane spans lie at I8–N28, M240–A260, F262–I282, P289–F309, F334–F354, and G361–T381.

This sequence belongs to the SecD/SecF family. SecD subfamily. As to quaternary structure, forms a complex with SecF. Part of the essential Sec protein translocation apparatus which comprises SecA, SecYEG and auxiliary proteins SecDF. Other proteins may also be involved.

It is found in the cell inner membrane. Functionally, part of the Sec protein translocase complex. Interacts with the SecYEG preprotein conducting channel. SecDF uses the proton motive force (PMF) to complete protein translocation after the ATP-dependent function of SecA. This is Protein translocase subunit SecD from Sebaldella termitidis (strain ATCC 33386 / NCTC 11300).